We begin with the raw amino-acid sequence, 198 residues long: Holliday junction branch migration complex subunit RuvA (198 aa).

Positions 1-63 (MYDYIKGQLT…EDAHLLFGFH (63 aa)) are domain I. Residues 64 to 142 (TEDEKDVFLK…EAPQETGHTK (79 aa)) form a domain II region. Residues 143–147 (ARSNK) are flexible linker. The segment at 148-198 (AGNTQLDEAIEALLALGYKATELKKIRAFFEGTSETAEQYIKSALKLLMKG) is domain III.

This sequence belongs to the RuvA family. As to quaternary structure, homotetramer. Forms an RuvA(8)-RuvB(12)-Holliday junction (HJ) complex. HJ DNA is sandwiched between 2 RuvA tetramers; dsDNA enters through RuvA and exits via RuvB. An RuvB hexamer assembles on each DNA strand where it exits the tetramer. Each RuvB hexamer is contacted by two RuvA subunits (via domain III) on 2 adjacent RuvB subunits; this complex drives branch migration. In the full resolvosome a probable DNA-RuvA(4)-RuvB(12)-RuvC(2) complex forms which resolves the HJ.

The protein localises to the cytoplasm. In terms of biological role, the RuvA-RuvB-RuvC complex processes Holliday junction (HJ) DNA during genetic recombination and DNA repair, while the RuvA-RuvB complex plays an important role in the rescue of blocked DNA replication forks via replication fork reversal (RFR). RuvA specifically binds to HJ cruciform DNA, conferring on it an open structure. The RuvB hexamer acts as an ATP-dependent pump, pulling dsDNA into and through the RuvAB complex. HJ branch migration allows RuvC to scan DNA until it finds its consensus sequence, where it cleaves and resolves the cruciform DNA. This Streptococcus pyogenes serotype M6 (strain ATCC BAA-946 / MGAS10394) protein is Holliday junction branch migration complex subunit RuvA.